We begin with the raw amino-acid sequence, 447 residues long: Methylenetetrahydrofolate--tRNA-(uracil-5-)-methyltransferase TrmFO (447 aa).

An FAD-binding site is contributed by G13 to G18.

It belongs to the MnmG family. TrmFO subfamily. FAD serves as cofactor.

It localises to the cytoplasm. It catalyses the reaction uridine(54) in tRNA + (6R)-5,10-methylene-5,6,7,8-tetrahydrofolate + NADH + H(+) = 5-methyluridine(54) in tRNA + (6S)-5,6,7,8-tetrahydrofolate + NAD(+). The enzyme catalyses uridine(54) in tRNA + (6R)-5,10-methylene-5,6,7,8-tetrahydrofolate + NADPH + H(+) = 5-methyluridine(54) in tRNA + (6S)-5,6,7,8-tetrahydrofolate + NADP(+). In terms of biological role, catalyzes the folate-dependent formation of 5-methyl-uridine at position 54 (M-5-U54) in all tRNAs. The chain is Methylenetetrahydrofolate--tRNA-(uracil-5-)-methyltransferase TrmFO from Streptococcus thermophilus (strain ATCC BAA-250 / LMG 18311).